Here is a 907-residue protein sequence, read N- to C-terminus: Protein translocase subunit SecA (907 aa).

ATP contacts are provided by residues Gln87, 105 to 109, and Asp512; that span reads GEGKT. The interval 834–907 is disordered; it reads QSDVDDMEQR…KYKQCHGKLS (74 aa). Basic and acidic residues predominate over residues 840–856; it reads MEQRRREEEAKIQRDYQ. Residues 865-876 show a composition bias toward polar residues; that stretch reads DESQASSDNTPK. Over residues 878–887 the composition is skewed to basic and acidic residues; that stretch reads MIREGDKVGR. The Zn(2+) site is built by Cys891, Cys893, Cys902, and His903. Over residues 897–907 the composition is skewed to basic residues; the sequence is KKYKQCHGKLS.

It belongs to the SecA family. Monomer and homodimer. Part of the essential Sec protein translocation apparatus which comprises SecA, SecYEG and auxiliary proteins SecDF-YajC and YidC. Zn(2+) is required as a cofactor.

It is found in the cell inner membrane. The protein localises to the cytoplasm. It carries out the reaction ATP + H2O + cellular proteinSide 1 = ADP + phosphate + cellular proteinSide 2.. Functionally, part of the Sec protein translocase complex. Interacts with the SecYEG preprotein conducting channel. Has a central role in coupling the hydrolysis of ATP to the transfer of proteins into and across the cell membrane, serving both as a receptor for the preprotein-SecB complex and as an ATP-driven molecular motor driving the stepwise translocation of polypeptide chains across the membrane. This chain is Protein translocase subunit SecA, found in Shewanella denitrificans (strain OS217 / ATCC BAA-1090 / DSM 15013).